We begin with the raw amino-acid sequence, 465 residues long: Glutamate--tRNA ligase (465 aa).

The 'HIGH' region signature appears at 11–21 (PSPTGFIHLGN). The segment at 118–139 (GEKPRYDGTWRPAPGKILPPPP) is disordered. Positions 243–247 (KMSKR) match the 'KMSKS' region motif. Lys-246 is a binding site for ATP.

The protein belongs to the class-I aminoacyl-tRNA synthetase family. Glutamate--tRNA ligase type 1 subfamily. In terms of assembly, monomer.

The protein resides in the cytoplasm. It carries out the reaction tRNA(Glu) + L-glutamate + ATP = L-glutamyl-tRNA(Glu) + AMP + diphosphate. Functionally, catalyzes the attachment of glutamate to tRNA(Glu) in a two-step reaction: glutamate is first activated by ATP to form Glu-AMP and then transferred to the acceptor end of tRNA(Glu). The chain is Glutamate--tRNA ligase from Ralstonia pickettii (strain 12J).